The primary structure comprises 193 residues: ATP-dependent Clp protease proteolytic subunit 2 (193 aa).

S98 serves as the catalytic Nucleophile. The active site involves H123.

The protein belongs to the peptidase S14 family. As to quaternary structure, fourteen ClpP subunits assemble into 2 heptameric rings which stack back to back to give a disk-like structure with a central cavity, resembling the structure of eukaryotic proteasomes.

The protein localises to the cytoplasm. It catalyses the reaction Hydrolysis of proteins to small peptides in the presence of ATP and magnesium. alpha-casein is the usual test substrate. In the absence of ATP, only oligopeptides shorter than five residues are hydrolyzed (such as succinyl-Leu-Tyr-|-NHMec, and Leu-Tyr-Leu-|-Tyr-Trp, in which cleavage of the -Tyr-|-Leu- and -Tyr-|-Trp bonds also occurs).. Its function is as follows. Cleaves peptides in various proteins in a process that requires ATP hydrolysis. Has a chymotrypsin-like activity. Plays a major role in the degradation of misfolded proteins. The sequence is that of ATP-dependent Clp protease proteolytic subunit 2 from Bacillus anthracis.